Reading from the N-terminus, the 431-residue chain is Adenylosuccinate synthetase (431 aa).

GTP is bound by residues 12–18 and 40–42; these read GDEGKGK and GHT. The active-site Proton acceptor is the Asp13. Mg(2+) contacts are provided by Asp13 and Gly40. Residues 13–16, 38–41, Thr129, Arg143, Gln224, Thr239, and Arg303 contribute to the IMP site; these read DEGK and NAGH. His41 (proton donor) is an active-site residue. Substrate is bound at residue 299–305; sequence TVSNRQR. Residues Arg305, 331-333, and 413-415 contribute to the GTP site; these read KLD and STG.

It belongs to the adenylosuccinate synthetase family. In terms of assembly, homodimer. Mg(2+) serves as cofactor.

Its subcellular location is the cytoplasm. The enzyme catalyses IMP + L-aspartate + GTP = N(6)-(1,2-dicarboxyethyl)-AMP + GDP + phosphate + 2 H(+). It functions in the pathway purine metabolism; AMP biosynthesis via de novo pathway; AMP from IMP: step 1/2. In terms of biological role, plays an important role in the de novo pathway of purine nucleotide biosynthesis. Catalyzes the first committed step in the biosynthesis of AMP from IMP. This is Adenylosuccinate synthetase from Ehrlichia canis (strain Jake).